The sequence spans 1444 residues: DNA polymerase III PolC-type (1444 aa).

An Exonuclease domain is found at 421–577 (YVVFDVETTG…ADAEATGYLL (157 aa)).

It belongs to the DNA polymerase type-C family. PolC subfamily.

It localises to the cytoplasm. It catalyses the reaction DNA(n) + a 2'-deoxyribonucleoside 5'-triphosphate = DNA(n+1) + diphosphate. Required for replicative DNA synthesis. This DNA polymerase also exhibits 3' to 5' exonuclease activity. In Lacticaseibacillus paracasei (strain ATCC 334 / BCRC 17002 / CCUG 31169 / CIP 107868 / KCTC 3260 / NRRL B-441) (Lactobacillus paracasei), this protein is DNA polymerase III PolC-type.